Here is a 253-residue protein sequence, read N- to C-terminus: 5-oxoprolinase subunit A (253 aa).

The protein belongs to the LamB/PxpA family. Forms a complex composed of PxpA, PxpB and PxpC.

It carries out the reaction 5-oxo-L-proline + ATP + 2 H2O = L-glutamate + ADP + phosphate + H(+). Functionally, catalyzes the cleavage of 5-oxoproline to form L-glutamate coupled to the hydrolysis of ATP to ADP and inorganic phosphate. In Bacillus licheniformis (strain ATCC 14580 / DSM 13 / JCM 2505 / CCUG 7422 / NBRC 12200 / NCIMB 9375 / NCTC 10341 / NRRL NRS-1264 / Gibson 46), this protein is 5-oxoprolinase subunit A.